A 1482-amino-acid polypeptide reads, in one-letter code: Cystic fibrosis transmembrane conductance regulator (1482 aa).

The Cytoplasmic segment spans residues 1–77; it reads MQKSPLERAS…KLINALRRCF (77 aa). Residues 78–98 form a helical membrane-spanning segment; that stretch reads FWRFVFYGILLYLGEVTKAVQ. One can recognise an ABC transmembrane type-1 1 domain in the interval 81 to 365; the sequence is FVFYGILLYL…WAVQTWYDSL (285 aa). Topologically, residues 99–122 are extracellular; it reads PLLLGRIIASYDPDNKVERSIAIY. The helical transmembrane segment at 123 to 146 threads the bilayer; it reads LAIGLCLLFIVRTLLLHPAIFGLH. Residues 147-195 are Cytoplasmic-facing; it reads HMGMQMRIAMFSLIYKKTLKLSSRVLDKISIGQLVSLLSNNLNKFDEGL. A helical membrane pass occupies residues 196–216; sequence ALAHFVWIAPLQVTLLMGLIW. Residues 217 to 222 lie on the Extracellular side of the membrane; it reads DLLQAS. A helical membrane pass occupies residues 223–243; the sequence is AFCGLAFLIIVALGQAGLGRM. Topologically, residues 244-298 are cytoplasmic; it reads MMKYRDKRAGKINERLVITSEMIENIQSVKAYCWEEAMEKMIENLRQIELRLTRK. The chain crosses the membrane as a helical span at residues 299–319; that stretch reads AAYVRYFNSAAFFFSGFFVVF. Residues 320-339 are Extracellular-facing; it reads LSVLPYAMLKGIILRKIFTT. Residues 340–358 traverse the membrane as a helical segment; that stretch reads ISFCIVLRMAVTRQFPWAV. Over 359–858 the chain is Cytoplasmic; sequence QTWYDSLGAI…YLRYVTVHKS (500 aa). ATP is bound by residues W401, S434, 458 to 465, and Q493; that span reads GSTGAGKT. An ABC transporter 1 domain is found at 423 to 646; the sequence is NGDNSLFFSN…RPDFSSELMG (224 aa). C524 is lipidated: S-palmitoyl cysteine. A phosphoserine mark is found at S549 and S660. The tract at residues 654–831 is disordered R region; the sequence is SAERRNSILT…EEINEEDLKE (178 aa). S670 is modified (phosphoserine; by PKA). S685 is modified (phosphoserine). K687 is covalently cross-linked (Glycyl lysine isopeptide (Lys-Gly) (interchain with G-Cter in ubiquitin)). Phosphoserine is present on residues S699 and S711. Phosphothreonine is present on T716. Phosphoserine is present on residues S736, S767, S790, S795, and S813. Residues 859 to 879 traverse the membrane as a helical segment; sequence LIFVLIWCLVVFLAEVAVSLV. The ABC transmembrane type-1 2 domain maps to 859–1156; sequence LIFVLIWCLV…AVNSSIDVDS (298 aa). The Extracellular portion of the chain corresponds to 880–919; sequence VLYLLRTSSLQDKGNNTTVNANSSYGVIVTNTSSYYLLYI. N894, N895, N901, and N910 each carry an N-linked (GlcNAc...) asparagine glycan. Residues 920–940 form a discontinuously helical membrane-spanning segment; the sequence is YVGIADSLFALAIFRGLPLVH. Residues 941-991 are Cytoplasmic-facing; it reads TLIKVSKTLHHKMLRSILQAPMSTFNTLKAGRILNRFSKDIAILDDLLPLT. Residues 992 to 1012 traverse the membrane as a helical segment; sequence MFDFIQLLLIVIGAVVVVSVL. Residues 1013–1014 are Extracellular-facing; it reads QP. Residues 1015–1035 form a helical membrane-spanning segment; the sequence is YIFLATVPVIAAFIILRAYFL. The Cytoplasmic segment spans residues 1036 to 1096; that stretch reads HTSQQLKQLE…TANWFLYLST (61 aa). A helical transmembrane segment spans residues 1097–1117; sequence LRWFQMRIEIIFVIFFIAVTF. Residues 1118 to 1131 lie on the Extracellular side of the membrane; that stretch reads VSILTTGEGEGTIG. Residues 1132 to 1152 traverse the membrane as a helical segment; the sequence is IILTLAMNIMNTLQWAVNSSI. Topologically, residues 1153-1482 are cytoplasmic; that stretch reads DVDSLMRSVS…TEEEVQETRL (330 aa). Residues 1212–1445 enclose the ABC transporter 2 domain; that stretch reads MTVKDLTAKY…KSLFRQAISP (234 aa). ATP-binding positions include Y1221 and 1246–1253; that span reads GRTGSGKS. The interval 1388-1482 is interaction with GORASP2; that stretch reads RTLKQAFADC…TEEEVQETRL (95 aa). C1397 carries the S-palmitoyl cysteine lipid modification. Positions 1454–1463 are enriched in basic residues; sequence HRNSSRHRSR. The segment at 1454 to 1482 is disordered; the sequence is HRNSSRHRSRSQIAALKEETEEEVQETRL. Residue S1458 is modified to Phosphoserine. The segment covering 1472-1482 has biased composition (acidic residues); that stretch reads ETEEEVQETRL. The PDZ-binding signature appears at 1480-1482; sequence TRL.

Belongs to the ABC transporter superfamily. ABCC family. CFTR transporter (TC 3.A.1.202) subfamily. Monomer; does not require oligomerization for channel activity. May form oligomers in the membrane. Interacts with SLC26A3, SLC26A6 and NHERF1. Interacts with SHANK2. Interacts with MYO6. Interacts (via C-terminus) with GOPC (via PDZ domain); this promotes CFTR internalization and thereby decreases channel activity. Interacts with SLC4A7 through NHERF1. Found in a complex with MYO5B and RAB11A. Interacts with ANO1. Interacts with SLC26A8. Interacts with AHCYL1; the interaction increases CFTR activity. Interacts with CSE1L. The core-glycosylated form interacts with GORASP2 (via PDZ GRASP-type 1 domain) in respone to ER stress. Interacts with MARCHF2; the interaction leads to CFTR ubiqtuitination and degradation. Interacts with ADGRG2. In terms of processing, N-glycosylated. Post-translationally, phosphorylated; cAMP treatment promotes phosphorylation and activates the channel. Dephosphorylation decreases the ATPase activity (in vitro). Phosphorylation at PKA sites activates the channel. Phosphorylation at PKC sites enhances the response to phosphorylation by PKA. Phosphorylated by AMPK; this inhibits channel activity. Ubiquitinated, leading to its degradation in the lysosome. Deubiquitination by USP10 in early endosomes enhances its endocytic recycling to the cell membrane. Ubiquitinated by RNF185 during ER stress. Ubiquitinated by MARCHF2.

It localises to the apical cell membrane. The protein localises to the early endosome membrane. It is found in the cell membrane. The protein resides in the recycling endosome membrane. Its subcellular location is the endoplasmic reticulum membrane. It localises to the nucleus. It catalyses the reaction ATP + H2O + closed Cl(-) channel = ADP + phosphate + open Cl(-) channel.. It carries out the reaction chloride(in) = chloride(out). The catalysed reaction is hydrogencarbonate(in) = hydrogencarbonate(out). The enzyme catalyses ATP + H2O = ADP + phosphate + H(+). In terms of biological role, epithelial ion channel that plays an important role in the regulation of epithelial ion and water transport and fluid homeostasis. Mediates the transport of chloride ions across the cell membrane. Possesses an intrinsic ATPase activity and utilizes ATP to gate its channel; the passive flow of anions through the channel is gated by cycles of ATP binding and hydrolysis by the ATP-binding domains. The ion channel is also permeable to HCO(3)(-); selectivity depends on the extracellular chloride concentration. Exerts its function also by modulating the activity of other ion channels and transporters. Contributes to the regulation of the pH and the ion content of the epithelial fluid layer. Modulates the activity of the epithelial sodium channel (ENaC) complex, in part by regulating the cell surface expression of the ENaC complex. May regulate bicarbonate secretion and salvage in epithelial cells by regulating the transporter SLC4A7. Can inhibit the chloride channel activity of ANO1. Plays a role in the chloride and bicarbonate homeostasis during sperm epididymal maturation and capacitation. This is Cystic fibrosis transmembrane conductance regulator from Loxodonta africana (African elephant).